The following is a 388-amino-acid chain: Granulocyte-macrophage colony-stimulating factor receptor subunit alpha (388 aa).

The N-terminal stretch at 1–29 (MTSSHAMNITPLAQLALLFSTLLLPGTQA) is a signal peptide. The Extracellular portion of the chain corresponds to 30–327 (LLAPTTPDAG…PLEAEDTRVP (298 aa)). Asn43, Asn63, Asn106, Asn132, Asn165, and Asn237 each carry an N-linked (GlcNAc...) asparagine glycan. A Fibronectin type-III domain is found at 228-324 (PPRDVTASCN…PAHPLEAEDT (97 aa)). A WSXWS motif motif is present at residues 310 to 314 (WGEWS). A helical transmembrane segment spans residues 328–348 (GALLYAVTACAVLLCALALGV). The Cytoplasmic portion of the chain corresponds to 349-388 (TCRRFEVTRRLFPPIPGIRDKVSDDVRVNPETLRKDLLQP). Residues 359-367 (LFPPIPGIR) carry the Box 1 motif motif.

This sequence belongs to the type I cytokine receptor family. Type 5 subfamily. Heterodimer of an alpha and a beta subunit. The beta subunit is common to the IL3, IL5 and GM-CSF receptors. The signaling GM-CSF receptor complex is a dodecamer of two head-to-head hexamers of two alpha, two beta, and two ligand subunits.

The protein localises to the membrane. Low affinity receptor for granulocyte-macrophage colony-stimulating factor. Transduces a signal that results in the proliferation, differentiation, and functional activation of hematopoietic cells. This Mus musculus (Mouse) protein is Granulocyte-macrophage colony-stimulating factor receptor subunit alpha (Csf2ra).